A 507-amino-acid chain; its full sequence is Probable cytosol aminopeptidase (507 aa).

Residues Lys-254 and Asp-259 each contribute to the Mn(2+) site. Lys-266 is an active-site residue. Positions 277, 336, and 338 each coordinate Mn(2+). Residue Arg-340 is part of the active site. The disordered stretch occupies residues 486-507 (PRKAQPKARSAKRSKPVSRTRA). The span at 489–507 (AQPKARSAKRSKPVSRTRA) shows a compositional bias: basic residues.

Belongs to the peptidase M17 family. Mn(2+) serves as cofactor.

It is found in the cytoplasm. The enzyme catalyses Release of an N-terminal amino acid, Xaa-|-Yaa-, in which Xaa is preferably Leu, but may be other amino acids including Pro although not Arg or Lys, and Yaa may be Pro. Amino acid amides and methyl esters are also readily hydrolyzed, but rates on arylamides are exceedingly low.. The catalysed reaction is Release of an N-terminal amino acid, preferentially leucine, but not glutamic or aspartic acids.. Its function is as follows. Presumably involved in the processing and regular turnover of intracellular proteins. Catalyzes the removal of unsubstituted N-terminal amino acids from various peptides. The sequence is that of Probable cytosol aminopeptidase from Polaromonas sp. (strain JS666 / ATCC BAA-500).